Consider the following 1200-residue polypeptide: Chromosome partition protein Smc (1200 aa).

32–39 contacts ATP; the sequence is PNGCGKSN. Coiled-coil stretches lie at residues 171-219 and 252-342; these read VTKY…AEKY and LENL…MSEA. Residues 528–644 form the SMC hinge domain; sequence QGIFGLVADV…QDVATARAWT (117 aa). Coiled-coil stretches lie at residues 679 to 706 and 735 to 762; these read ALQK…ILTR and LASQ…LEVE. A disordered region spans residues 763-795; sequence EGQLTQSHQALEHEEEASRGEVAHGQADREGRE. A compositionally biased stretch (basic and acidic residues) spans 772-795; it reads ALEHEEEASRGEVAHGQADREGRE. Residues 1002–1039 adopt a coiled-coil conformation; the sequence is HAELSKRYDFLTAQKKDLQSSIEQLKEAIQRIDATSRE.

It belongs to the SMC family. Homodimer. Probably forms the Structural Maintenance of Chromosome (SMC) condensin-like complex with ScpA and ScpB.

The protein localises to the cytoplasm. In terms of biological role, a conditionally essential component of the chromosome segregation machinery. Required for chromosome condensation and partitioning. Important for positioning of ParB-parS complexes (ori of replication) and of the ter replication site, as well as for segration of the ParB-parS complex and thus chromosome segregation. May act via the formation of a condensin-like complex containing Smc, ScpA and ScpB that pulls DNA away from mid-cell into both cell halves. This chain is Chromosome partition protein Smc, found in Myxococcus xanthus (strain DK1622).